The chain runs to 223 residues: Urease accessory protein UreF (223 aa).

Belongs to the UreF family. UreD, UreF and UreG form a complex that acts as a GTP-hydrolysis-dependent molecular chaperone, activating the urease apoprotein by helping to assemble the nickel containing metallocenter of UreC. The UreE protein probably delivers the nickel.

The protein localises to the cytoplasm. Required for maturation of urease via the functional incorporation of the urease nickel metallocenter. The polypeptide is Urease accessory protein UreF (Sinorhizobium medicae (strain WSM419) (Ensifer medicae)).